We begin with the raw amino-acid sequence, 115 residues long: Large ribosomal subunit protein uL22 (115 aa).

The protein belongs to the universal ribosomal protein uL22 family. As to quaternary structure, part of the 50S ribosomal subunit.

Its function is as follows. This protein binds specifically to 23S rRNA; its binding is stimulated by other ribosomal proteins, e.g. L4, L17, and L20. It is important during the early stages of 50S assembly. It makes multiple contacts with different domains of the 23S rRNA in the assembled 50S subunit and ribosome. In terms of biological role, the globular domain of the protein is located near the polypeptide exit tunnel on the outside of the subunit, while an extended beta-hairpin is found that lines the wall of the exit tunnel in the center of the 70S ribosome. In Thioalkalivibrio sulfidiphilus (strain HL-EbGR7), this protein is Large ribosomal subunit protein uL22.